The primary structure comprises 116 residues: Nucleoid-associated protein Tfu_0045 (116 aa).

This sequence belongs to the YbaB/EbfC family. Homodimer.

The protein localises to the cytoplasm. Its subcellular location is the nucleoid. In terms of biological role, binds to DNA and alters its conformation. May be involved in regulation of gene expression, nucleoid organization and DNA protection. The sequence is that of Nucleoid-associated protein Tfu_0045 from Thermobifida fusca (strain YX).